The following is a 167-amino-acid chain: Peptide deformylase (167 aa).

Residues Cys-91 and His-133 each coordinate Fe cation. Residue Glu-134 is part of the active site. His-137 is a Fe cation binding site.

The protein belongs to the polypeptide deformylase family. Fe(2+) is required as a cofactor.

It catalyses the reaction N-terminal N-formyl-L-methionyl-[peptide] + H2O = N-terminal L-methionyl-[peptide] + formate. Removes the formyl group from the N-terminal Met of newly synthesized proteins. Requires at least a dipeptide for an efficient rate of reaction. N-terminal L-methionine is a prerequisite for activity but the enzyme has broad specificity at other positions. The polypeptide is Peptide deformylase (Chromobacterium violaceum (strain ATCC 12472 / DSM 30191 / JCM 1249 / CCUG 213 / NBRC 12614 / NCIMB 9131 / NCTC 9757 / MK)).